The sequence spans 136 residues: Protein NrdI (136 aa).

The protein belongs to the NrdI family.

Probably involved in ribonucleotide reductase function. The protein is Protein NrdI of Shigella dysenteriae serotype 1 (strain Sd197).